The sequence spans 827 residues: Zinc finger protein 438 (827 aa).

Disordered regions lie at residues 1 to 31 (MQNS…LQNK), 117 to 173 (LKLP…LYKP), and 193 to 232 (ALTN…AKQD). Composition is skewed to polar residues over residues 16–31 (NIPS…LQNK) and 150–159 (PAQTQMCPQM). Positions 217–226 (PATPASPTPE) are enriched in pro residues. 3 consecutive C2H2-type zinc fingers follow at residues 506–528 (HRCH…MNTH), 534–556 (YSCR…MKLH), and 566–589 (MCCE…KEVH). The tract at residues 682–723 (FPGSKGTQEELVQHASHDWKRHPERGKPEKVHSSSEESHACP) is disordered. Basic and acidic residues-rich tracts occupy residues 688–699 (TQEELVQHASHD) and 706–721 (RGKP…ESHA). A C2H2-type 4 zinc finger spans residues 775 to 798 (FNCLLCAEMLGQKEDLLHHWKHQH).

Its subcellular location is the nucleus. In terms of biological role, acts as a transcriptional repressor. This Pongo abelii (Sumatran orangutan) protein is Zinc finger protein 438 (ZNF438).